The sequence spans 85 residues: U4-theraphotoxin-Hhn1s (85 aa).

The N-terminal stretch at 1–22 is a signal peptide; that stretch reads MKVTLIAILTCAAVLVLHTTAA. The propeptide occupies 23-48; it reads EELEAESQLMEVGMPDTELAAVDEER. 3 disulfide bridges follow: C52–C66, C56–C77, and C71–C82.

This sequence belongs to the neurotoxin 12 (Hwtx-2) family. 02 (Hwtx-2) subfamily. In terms of tissue distribution, expressed by the venom gland.

It is found in the secreted. Its function is as follows. Postsynaptic neurotoxin. The chain is U4-theraphotoxin-Hhn1s from Cyriopagopus hainanus (Chinese bird spider).